Here is a 195-residue protein sequence, read N- to C-terminus: Peptidyl-tRNA hydrolase (195 aa).

Tyr-17 provides a ligand contact to tRNA. The active-site Proton acceptor is the His-22. Residues Phe-68, Asn-70, and Asn-116 each contribute to the tRNA site.

Belongs to the PTH family. As to quaternary structure, monomer.

The protein localises to the cytoplasm. It carries out the reaction an N-acyl-L-alpha-aminoacyl-tRNA + H2O = an N-acyl-L-amino acid + a tRNA + H(+). Hydrolyzes ribosome-free peptidyl-tRNAs (with 1 or more amino acids incorporated), which drop off the ribosome during protein synthesis, or as a result of ribosome stalling. In terms of biological role, catalyzes the release of premature peptidyl moieties from peptidyl-tRNA molecules trapped in stalled 50S ribosomal subunits, and thus maintains levels of free tRNAs and 50S ribosomes. This Pectobacterium carotovorum subsp. carotovorum (strain PC1) protein is Peptidyl-tRNA hydrolase.